The sequence spans 118 residues: Small ribosomal subunit protein uS13 (118 aa).

The disordered stretch occupies residues glycine 94–lysine 118. The segment covering arginine 107–lysine 118 has biased composition (basic residues).

It belongs to the universal ribosomal protein uS13 family. As to quaternary structure, part of the 30S ribosomal subunit. Forms a loose heterodimer with protein S19. Forms two bridges to the 50S subunit in the 70S ribosome.

In terms of biological role, located at the top of the head of the 30S subunit, it contacts several helices of the 16S rRNA. In the 70S ribosome it contacts the 23S rRNA (bridge B1a) and protein L5 of the 50S subunit (bridge B1b), connecting the 2 subunits; these bridges are implicated in subunit movement. Contacts the tRNAs in the A and P-sites. The sequence is that of Small ribosomal subunit protein uS13 from Nitrosococcus oceani (strain ATCC 19707 / BCRC 17464 / JCM 30415 / NCIMB 11848 / C-107).